Consider the following 312-residue polypeptide: Ribonuclease HIII (312 aa).

The region spanning 95–311 is the RNase H type-2 domain; that stretch reads FNCIGSDEAG…REKAQKILKP (217 aa). A divalent metal cation contacts are provided by aspartate 101, glutamate 102, and aspartate 206.

Belongs to the RNase HII family. RnhC subfamily. Requires Mn(2+) as cofactor. Mg(2+) is required as a cofactor.

The protein resides in the cytoplasm. It catalyses the reaction Endonucleolytic cleavage to 5'-phosphomonoester.. Endonuclease that specifically degrades the RNA of RNA-DNA hybrids. This is Ribonuclease HIII from Staphylococcus aureus (strain Mu3 / ATCC 700698).